Here is an 893-residue protein sequence, read N- to C-terminus: DNA mismatch repair protein MutS (893 aa).

G637–S644 serves as a coordination point for ATP.

The protein belongs to the DNA mismatch repair MutS family.

Its function is as follows. This protein is involved in the repair of mismatches in DNA. It is possible that it carries out the mismatch recognition step. This protein has a weak ATPase activity. In Burkholderia thailandensis (strain ATCC 700388 / DSM 13276 / CCUG 48851 / CIP 106301 / E264), this protein is DNA mismatch repair protein MutS.